The following is a 435-amino-acid chain: Methylenetetrahydrofolate--tRNA-(uracil-5-)-methyltransferase TrmFO (435 aa).

9 to 14 (GAGLAG) is a binding site for FAD.

The protein belongs to the MnmG family. TrmFO subfamily. FAD serves as cofactor.

Its subcellular location is the cytoplasm. It catalyses the reaction uridine(54) in tRNA + (6R)-5,10-methylene-5,6,7,8-tetrahydrofolate + NADH + H(+) = 5-methyluridine(54) in tRNA + (6S)-5,6,7,8-tetrahydrofolate + NAD(+). The enzyme catalyses uridine(54) in tRNA + (6R)-5,10-methylene-5,6,7,8-tetrahydrofolate + NADPH + H(+) = 5-methyluridine(54) in tRNA + (6S)-5,6,7,8-tetrahydrofolate + NADP(+). Its function is as follows. Catalyzes the folate-dependent formation of 5-methyl-uridine at position 54 (M-5-U54) in all tRNAs. This chain is Methylenetetrahydrofolate--tRNA-(uracil-5-)-methyltransferase TrmFO, found in Staphylococcus aureus (strain MRSA252).